The chain runs to 175 residues: ATP synthase subunit b (175 aa).

The helical transmembrane segment at 19 to 35 threads the bilayer; that stretch reads GLIFWTTVTFLIVLFIL.

It belongs to the ATPase B chain family. In terms of assembly, F-type ATPases have 2 components, F(1) - the catalytic core - and F(0) - the membrane proton channel. F(1) has five subunits: alpha(3), beta(3), gamma(1), delta(1), epsilon(1). F(0) has four main subunits: a(1), b(2) and c(10-14). The alpha and beta chains form an alternating ring which encloses part of the gamma chain. F(1) is attached to F(0) by a central stalk formed by the gamma and epsilon chains, while a peripheral stalk is formed by the delta and b chains.

The protein resides in the cell inner membrane. Its function is as follows. F(1)F(0) ATP synthase produces ATP from ADP in the presence of a proton or sodium gradient. F-type ATPases consist of two structural domains, F(1) containing the extramembraneous catalytic core and F(0) containing the membrane proton channel, linked together by a central stalk and a peripheral stalk. During catalysis, ATP synthesis in the catalytic domain of F(1) is coupled via a rotary mechanism of the central stalk subunits to proton translocation. In terms of biological role, component of the F(0) channel, it forms part of the peripheral stalk, linking F(1) to F(0). The chain is ATP synthase subunit b from Chlorobium phaeobacteroides (strain BS1).